Consider the following 83-residue polypeptide: Beta-defensin 19 (83 aa).

An N-terminal signal peptide occupies residues 1–19 (MRLALLLLAILVATELVVS). 3 cysteine pairs are disulfide-bonded: Cys27-Cys54, Cys34-Cys48, and Cys38-Cys55.

This sequence belongs to the beta-defensin family. Specifically expressed in male gonads (Sertoli cells).

The protein resides in the secreted. In terms of biological role, has antibacterial activity. In Mus musculus (Mouse), this protein is Beta-defensin 19 (Defb19).